The chain runs to 303 residues: Sulfate adenylyltransferase subunit 2 (303 aa).

The protein belongs to the PAPS reductase family. CysD subfamily. In terms of assembly, heterodimer composed of CysD, the smaller subunit, and CysN.

The enzyme catalyses sulfate + ATP + H(+) = adenosine 5'-phosphosulfate + diphosphate. It functions in the pathway sulfur metabolism; hydrogen sulfide biosynthesis; sulfite from sulfate: step 1/3. With CysN forms the ATP sulfurylase (ATPS) that catalyzes the adenylation of sulfate producing adenosine 5'-phosphosulfate (APS) and diphosphate, the first enzymatic step in sulfur assimilation pathway. APS synthesis involves the formation of a high-energy phosphoric-sulfuric acid anhydride bond driven by GTP hydrolysis by CysN coupled to ATP hydrolysis by CysD. This chain is Sulfate adenylyltransferase subunit 2, found in Sulfurimonas denitrificans (strain ATCC 33889 / DSM 1251) (Thiomicrospira denitrificans (strain ATCC 33889 / DSM 1251)).